Consider the following 320-residue polypeptide: Probable cell division protein WhiA (320 aa).

Residues 276–310 constitute a DNA-binding region (H-T-H motif); sequence TLKELGEMVESGKVSKSGVNHRLRKIDELAEKLRA.

Belongs to the WhiA family.

Functionally, involved in cell division and chromosome segregation. The sequence is that of Probable cell division protein WhiA from Halalkalibacterium halodurans (strain ATCC BAA-125 / DSM 18197 / FERM 7344 / JCM 9153 / C-125) (Bacillus halodurans).